We begin with the raw amino-acid sequence, 167 residues long: NAD(P)H-quinone oxidoreductase subunit I, chloroplastic (167 aa).

4Fe-4S ferredoxin-type domains lie at 55 to 84 (GRIH…VDWK) and 95 to 124 (LNYS…MTEE). 8 residues coordinate [4Fe-4S] cluster: C64, C67, C70, C74, C104, C107, C110, and C114.

This sequence belongs to the complex I 23 kDa subunit family. As to quaternary structure, NDH is composed of at least 16 different subunits, 5 of which are encoded in the nucleus. [4Fe-4S] cluster serves as cofactor.

It localises to the plastid. The protein localises to the chloroplast thylakoid membrane. The enzyme catalyses a plastoquinone + NADH + (n+1) H(+)(in) = a plastoquinol + NAD(+) + n H(+)(out). It catalyses the reaction a plastoquinone + NADPH + (n+1) H(+)(in) = a plastoquinol + NADP(+) + n H(+)(out). Functionally, NDH shuttles electrons from NAD(P)H:plastoquinone, via FMN and iron-sulfur (Fe-S) centers, to quinones in the photosynthetic chain and possibly in a chloroplast respiratory chain. The immediate electron acceptor for the enzyme in this species is believed to be plastoquinone. Couples the redox reaction to proton translocation, and thus conserves the redox energy in a proton gradient. In Citrus sinensis (Sweet orange), this protein is NAD(P)H-quinone oxidoreductase subunit I, chloroplastic.